The primary structure comprises 160 residues: Cytochrome b6-f complex subunit 4 (160 aa).

A run of 3 helical transmembrane segments spans residues 36-56 (LLYI…GLAV), 95-115 (LLGV…PFLE), and 131-151 (TVFL…ALPI).

Belongs to the cytochrome b family. PetD subfamily. In terms of assembly, the 4 large subunits of the cytochrome b6-f complex are cytochrome b6, subunit IV (17 kDa polypeptide, petD), cytochrome f and the Rieske protein, while the 4 small subunits are petG, petL, petM and petN. The complex functions as a dimer.

It localises to the plastid. The protein localises to the chloroplast thylakoid membrane. In terms of biological role, component of the cytochrome b6-f complex, which mediates electron transfer between photosystem II (PSII) and photosystem I (PSI), cyclic electron flow around PSI, and state transitions. The polypeptide is Cytochrome b6-f complex subunit 4 (Psilotum nudum (Whisk fern)).